The chain runs to 346 residues: Farnesyl diphosphate synthase 1 (346 aa).

Isopentenyl diphosphate is bound by residues Lys52, Arg55, and Gln90. 2 residues coordinate Mg(2+): Asp97 and Asp101. The DDXXD motif motif lies at 97–101 (DDIMD). A dimethylallyl diphosphate-binding site is contributed by Arg106. Residue Arg107 coordinates isopentenyl diphosphate. Residues Lys194, Thr195, and Gln233 each contribute to the dimethylallyl diphosphate site. The DDXXD motif signature appears at 236-240 (DDYLD). Residues Lys250 and Lys259 each contribute to the dimethylallyl diphosphate site.

This sequence belongs to the FPP/GGPP synthase family. It depends on Mg(2+) as a cofactor. The cofactor is Mn(2+). As to expression, highly expressed in shoots.

The enzyme catalyses isopentenyl diphosphate + (2E)-geranyl diphosphate = (2E,6E)-farnesyl diphosphate + diphosphate. The catalysed reaction is isopentenyl diphosphate + dimethylallyl diphosphate = (2E)-geranyl diphosphate + diphosphate. The protein operates within isoprenoid biosynthesis; farnesyl diphosphate biosynthesis; farnesyl diphosphate from geranyl diphosphate and isopentenyl diphosphate: step 1/1. It participates in isoprenoid biosynthesis; geranyl diphosphate biosynthesis; geranyl diphosphate from dimethylallyl diphosphate and isopentenyl diphosphate: step 1/1. Its function is as follows. Catalyzes the sequential condensation of isopentenyl pyrophosphate (IPP) with the allylic pyrophosphates, dimethylallyl pyrophosphate (DMAPP), and then with the resultant geranylpyrophosphate (GPP) to the ultimate product farnesyl pyrophosphate (FPP). Has a 4.5 time greater affinity for GPP versus DMAPP. This chain is Farnesyl diphosphate synthase 1 (FDS-1), found in Artemisia spiciformis (Spiked big sagebrush).